Consider the following 598-residue polypeptide: Integrator complex subunit 11 (598 aa).

Residues His68, His70, Asp72, His73, His157, and Asp178 each contribute to the Zn(2+) site. Residues 68–73 carry the HXHXDH motif motif; that stretch reads HFHLDH. Glu203 is a catalytic residue. His414 is a Zn(2+) binding site. Residues 470–480 carry the Nuclear localization signal motif; the sequence is PLPDAKRPRTM.

Belongs to the metallo-beta-lactamase superfamily. RNA-metabolizing metallo-beta-lactamase-like family. INTS11 subfamily. Component of the Integrator complex, composed of core subunits INTS1, INTS2, INTS3, INTS4, INTS5, INTS6, INTS7, INTS8, INTS9/RC74, INTS10, INTS11/CPSF3L, INTS12, INTS13, INTS14 and INTS15. The core complex associates with protein phosphatase 2A subunits PPP2CA and PPP2R1A, to form the Integrator-PP2A (INTAC) complex. INTS11 is part of the RNA endonuclease subcomplex, composed of INTS4, INTS9, INTS11 and inositol hexakisphosphate (InsP6). It depends on Zn(2+) as a cofactor.

Its subcellular location is the nucleus. The protein localises to the cytoplasm. Functionally, RNA endonuclease component of the integrator complex, a multiprotein complex that terminates RNA polymerase II (Pol II) transcription in the promoter-proximal region of genes. The integrator complex provides a quality checkpoint during transcription elongation by driving premature transcription termination of transcripts that are unfavorably configured for transcriptional elongation: the complex terminates transcription by (1) catalyzing dephosphorylation of the C-terminal domain (CTD) of Pol II subunit POLR2A/RPB1 and SUPT5H/SPT5, (2) degrading the exiting nascent RNA transcript via endonuclease activity and (3) promoting the release of Pol II from bound DNA. The integrator complex is also involved in terminating the synthesis of non-coding Pol II transcripts, such as enhancer RNAs (eRNAs), small nuclear RNAs (snRNAs), telomerase RNAs and long non-coding RNAs (lncRNAs). Within the integrator complex, INTS11 constitutes the RNA endonuclease subunit that degrades exiting nascent RNA transcripts. In Danio rerio (Zebrafish), this protein is Integrator complex subunit 11 (cpsf3l).